Consider the following 556-residue polypeptide: MIHWSLIVSALGVCVAVLGGYCGWILFPNMVHKKVEQSVVIQDGSEQFKRFVNLPQPLNFKVYIFNVTNSDRIQQGAIPIVEEIGPYVYKQFRQKKVKHFSRDGSKISYVQNVHFDFDAVASAPYTQDDRIVALNMHMNAFLQVFEREITDIFQGFANRLNSRLNQTPGVRVLKRLMERIRGKRKSVLQISENDPGLALLLVHLNANLKAVFNDPRSMFVSTSVREYLFDGVRFCINPQGIAKAICNQIKESGSKTIREKSDGSLAFSFFGHKNGSGHEVYEVHTGKGDPMRVLEIQKLDDSHNLQVWLNASSEGETSVCNQINGTDASAYPPFRQRGDSMYIFSADICRSVQLFYQTDIQYQGIPGYRYSIGENFINDIGPEHDNECFCVDKLANVIKRKNGCLYAGALDLTTCLDAPVILTLPHMLGASNEYRKMIRGLKPDAKKHQTFVDVQSLTGTPLQGGKRVQFNMFLKSINRIGITENLPTVLMPAIWVEEGIQLNGEMVAFFKKKLINTLKTLNIVHWATLCGGIGVAVACLIYYIYQRGRVVEPPVK.

Residues 1–6 lie on the Cytoplasmic side of the membrane; sequence MIHWSL. A helical membrane pass occupies residues 7-27; it reads IVSALGVCVAVLGGYCGWILF. Over 28–522 the chain is Extracellular; the sequence is PNMVHKKVEQ…KLINTLKTLN (495 aa). Asparagine 66, asparagine 274, asparagine 310, and asparagine 324 each carry an N-linked (GlcNAc...) asparagine glycan. Intrachain disulfides connect cysteine 320-cysteine 388 and cysteine 349-cysteine 415. A helical membrane pass occupies residues 523–543; the sequence is IVHWATLCGGIGVAVACLIYY. The Cytoplasmic segment spans residues 544–556; sequence IYQRGRVVEPPVK.

Belongs to the CD36 family. In terms of tissue distribution, detected in the head and to a lesser extent in legs and wings.

It is found in the cell membrane. In terms of biological role, plays an olfactory role that is not restricted to pheromone sensitivity. The sequence is that of Sensory neuron membrane protein 2 from Drosophila melanogaster (Fruit fly).